Consider the following 451-residue polypeptide: UDP-N-acetylmuramoylalanine--D-glutamate ligase (451 aa).

119–125 lines the ATP pocket; sequence GSNGKTT.

Belongs to the MurCDEF family.

It localises to the cytoplasm. The enzyme catalyses UDP-N-acetyl-alpha-D-muramoyl-L-alanine + D-glutamate + ATP = UDP-N-acetyl-alpha-D-muramoyl-L-alanyl-D-glutamate + ADP + phosphate + H(+). It participates in cell wall biogenesis; peptidoglycan biosynthesis. Its function is as follows. Cell wall formation. Catalyzes the addition of glutamate to the nucleotide precursor UDP-N-acetylmuramoyl-L-alanine (UMA). The protein is UDP-N-acetylmuramoylalanine--D-glutamate ligase of Geobacillus sp. (strain WCH70).